The primary structure comprises 59 residues: Large ribosomal subunit protein bL32 (59 aa).

Residues 1 to 15 are compositionally biased toward basic residues; that stretch reads MAVPKKKTSKSKRDM. The segment at 1–26 is disordered; that stretch reads MAVPKKKTSKSKRDMRRATWNRKAAA.

Belongs to the bacterial ribosomal protein bL32 family.

The protein is Large ribosomal subunit protein bL32 of Cyanothece sp. (strain PCC 7425 / ATCC 29141).